A 668-amino-acid polypeptide reads, in one-letter code: Endoplasmic reticulum membrane-associated RNA degradation protein (668 aa).

Helical transmembrane passes span 378–398 and 575–595; these read LLAF…LSVF and VLSL…AVCG.

The protein resides in the endoplasmic reticulum membrane. In terms of biological role, may play a role in neuronal migration during embryonic development. The polypeptide is Endoplasmic reticulum membrane-associated RNA degradation protein (ERMARD) (Macaca fascicularis (Crab-eating macaque)).